The chain runs to 404 residues: MSHSRYFFTSESVSEGHPDKVSDQISDAVLDEFIKQDPNSRVACETFVTTGQVIVGGEVTTKGIVDIQTIARKTITEIGYTKGEYMFDANSCGVLSALHSQSPDINRGVDRKEEIEDEFDRVGAGDQGMMFGYACTDTPELMPAAIQYAQELVRLLAEIRKEGKIMTYLRPDSKSQVTLEYDENDKVLRVDAVVVSTQHDPEPAGMSEAEFQEVIKNDIIENVIRKVIPAELIDENTKFHINPTGRFEIGGPHGDTGLTGRKIIVDTYGGAAPHGGGAFSGKDPSKVDRSAAYAARHVAKNIVAAGLADKCTVQVSYAIGVARPVSIYINTHGTGKHGLSDSQIQEKAEAIFDLRPLAIIRRFNLDRPHGWCYRDTAAYGHFGREQFPWEKTEKVAELKAAFGL.

Over residues 1-13 (MSHSRYFFTSESV) the composition is skewed to polar residues. A disordered region spans residues 1-20 (MSHSRYFFTSESVSEGHPDK). His17 is a binding site for ATP. Residue Asp19 coordinates Mg(2+). Glu45 serves as a coordination point for K(+). Positions 58 and 101 each coordinate L-methionine. The flexible loop stretch occupies residues 101-111 (QSPDINRGVDR). ATP contacts are provided by residues 172–174 (DSK), 246–247 (RF), Asp255, 261–262 (RK), Ala278, and Lys282. Asp255 is an L-methionine binding site. Lys286 lines the L-methionine pocket.

Belongs to the AdoMet synthase family. As to quaternary structure, homotetramer; dimer of dimers. The cofactor is Mg(2+). It depends on K(+) as a cofactor.

The protein localises to the cytoplasm. The enzyme catalyses L-methionine + ATP + H2O = S-adenosyl-L-methionine + phosphate + diphosphate. It functions in the pathway amino-acid biosynthesis; S-adenosyl-L-methionine biosynthesis; S-adenosyl-L-methionine from L-methionine: step 1/1. In terms of biological role, catalyzes the formation of S-adenosylmethionine (AdoMet) from methionine and ATP. The overall synthetic reaction is composed of two sequential steps, AdoMet formation and the subsequent tripolyphosphate hydrolysis which occurs prior to release of AdoMet from the enzyme. The protein is S-adenosylmethionine synthase of Chlorobaculum parvum (strain DSM 263 / NCIMB 8327) (Chlorobium vibrioforme subsp. thiosulfatophilum).